We begin with the raw amino-acid sequence, 199 residues long: Adenine phosphoribosyltransferase (199 aa).

The protein belongs to the purine/pyrimidine phosphoribosyltransferase family. In terms of assembly, homodimer.

It localises to the cytoplasm. It carries out the reaction AMP + diphosphate = 5-phospho-alpha-D-ribose 1-diphosphate + adenine. The protein operates within purine metabolism; AMP biosynthesis via salvage pathway; AMP from adenine: step 1/1. Catalyzes a salvage reaction resulting in the formation of AMP, that is energically less costly than de novo synthesis. The sequence is that of Adenine phosphoribosyltransferase from Rhodopseudomonas palustris (strain BisB18).